A 497-amino-acid polypeptide reads, in one-letter code: Interferon regulatory factor 5 (497 aa).

Residues 12–18 (PRRVRLK) carry the Nuclear localization signal motif. A DNA-binding region (IRF tryptophan pentad repeat) is located at residues 14–122 (RVRLKPWLVA…QPYKIYEVCS (109 aa)). The disordered stretch occupies residues 124–178 (GPAPTESQPTDDYVLGEEEEEEEEELQRMLPGLSITEPALPGPPNAPYSLPKEDT). Acidic residues predominate over residues 137 to 148 (VLGEEEEEEEEE). Positions 149–159 (LQRMLPGLSIT) match the Nuclear export signal motif. A Phosphoserine; by TBK1 modification is found at serine 157. A Phosphoserine modification is found at serine 300. Residues lysine 410 and lysine 411 each participate in a glycyl lysine isopeptide (Lys-Gly) (interchain with G-Cter in ubiquitin) cross-link. Serine 430 carries the phosphoserine modification. Serine 434 carries the phosphoserine; by IKKB modification. Residues serine 436 and serine 439 each carry the phosphoserine modification. Serine 445 bears the Phosphoserine; by IKKB mark.

It belongs to the IRF family. In terms of assembly, homodimer, when phosphorylated. Interacts with TASL (via pLxIS motif); interaction takes place downstream of TLR7, TLR8 or TLR9, leading to its activation. Interacts with MYD88 and TRAF6. Phosphorylation of serine and threonine residues by IKBKB in a C-terminal autoinhibitory region, stimulates dimerization, transport into the nucleus, assembly with the coactivator CBP/EP300 and initiation of transcription. In terms of processing, 'Lys-63'-linked polyubiquitination by TRAF6 is required for activation.

It is found in the cytoplasm. Its subcellular location is the nucleus. Maintained as a monomer in an autoinhibited state. Phosphorylation and activation follow the following steps: innate adapter protein TASL recruits IRF5, thereby licensing IRF5 for phosphorylation by IKBKB. Phosphorylated IRF5 dissociates from the adapter proteins, dimerizes, and then enters the nucleus to induce IFNs. Functionally, transcription factor that plays a critical role in innate immunity by activating expression of type I interferon (IFN) IFNA and INFB and inflammatory cytokines downstream of endolysosomal toll-like receptors TLR7, TLR8 and TLR9. Regulates the transcription of type I IFN genes (IFN-alpha and IFN-beta) and IFN-stimulated genes (ISG) by binding to an interferon-stimulated response element (ISRE) in their promoters. Can efficiently activate both the IFN-beta (IFNB) and the IFN-alpha (IFNA) genes and mediate their induction downstream of the TLR-activated, MyD88-dependent pathway. The polypeptide is Interferon regulatory factor 5 (Mus musculus (Mouse)).